The sequence spans 426 residues: MKQLRLEPVVQVRGEINIPGSKSISNRALLLATLAQGTTTLTNLLDSDDIRHMLASLKQLGVNYRLSQNNTECELDGLGGVISSESAQELFLGNAGTAMRPLCAALTLGQGEFTLTGEPRMEERPIGDLVDALRQLGANVVYLKNDGFPPLTINATGLSGGDVEIAGDLSSQFLTALLMVAPLAKGSVNIHVKGELVSKPYIDITLALMAQFGVTVINHDYARFEIVAGQQYVSPGKVLVEGDASSASYFLAAGAIKGGEVKVTGVGRLSIQGDVKFADVLEKMGADIEWGDDYIIARGSQLTAVDLDMNHIPDAAMTIATAALFAKGTTVIRNIYNWRIKETDRLAAMATELRKVGAEVEEGNDYIKITPPVVINTAEIDTYNDHRMAMCFSMLAFADCGITINDPDCTSKTFPDYFKQFASLQG.

Residues lysine 22, serine 23, and arginine 27 each contribute to the 3-phosphoshikimate site. Lysine 22 is a binding site for phosphoenolpyruvate. Residues glycine 96 and arginine 124 each contribute to the phosphoenolpyruvate site. 7 residues coordinate 3-phosphoshikimate: serine 170, serine 171, glutamine 172, serine 198, aspartate 314, asparagine 337, and lysine 341. Glutamine 172 serves as a coordination point for phosphoenolpyruvate. Aspartate 314 acts as the Proton acceptor in catalysis. Residues arginine 345, arginine 387, and lysine 412 each contribute to the phosphoenolpyruvate site.

It belongs to the EPSP synthase family. As to quaternary structure, monomer.

The protein localises to the cytoplasm. It catalyses the reaction 3-phosphoshikimate + phosphoenolpyruvate = 5-O-(1-carboxyvinyl)-3-phosphoshikimate + phosphate. The protein operates within metabolic intermediate biosynthesis; chorismate biosynthesis; chorismate from D-erythrose 4-phosphate and phosphoenolpyruvate: step 6/7. Its function is as follows. Catalyzes the transfer of the enolpyruvyl moiety of phosphoenolpyruvate (PEP) to the 5-hydroxyl of shikimate-3-phosphate (S3P) to produce enolpyruvyl shikimate-3-phosphate and inorganic phosphate. The protein is 3-phosphoshikimate 1-carboxyvinyltransferase of Shewanella baltica (strain OS185).